Consider the following 1062-residue polypeptide: Cell division control protein 7 (1062 aa).

Positions 9–259 (ITLGDCLGKG…TRKLLKHPWV (251 aa)) constitute a Protein kinase domain. ATP contacts are provided by residues 15-23 (LGKGAFGAV) and Lys38. The Proton acceptor role is filled by Asp131. Composition is skewed to polar residues over residues 296–310 (NRIN…QSSY) and 376–394 (AFNS…SPLS). Disordered regions lie at residues 296 to 331 (NRIN…NWDN), 361 to 394 (NNSS…SPLS), and 1038 to 1062 (NEHK…PLTQ).

This sequence belongs to the protein kinase superfamily. Ser/Thr protein kinase family. CDC7 subfamily. Interacts with spg1. Seems to interact with cdc11. It depends on Mg(2+) as a cofactor.

It catalyses the reaction L-seryl-[protein] + ATP = O-phospho-L-seryl-[protein] + ADP + H(+). The enzyme catalyses L-threonyl-[protein] + ATP = O-phospho-L-threonyl-[protein] + ADP + H(+). Protein kinase essential for cell division. Plays a key role in initiation of septum formation and cytokinesis. In Schizosaccharomyces pombe (strain 972 / ATCC 24843) (Fission yeast), this protein is Cell division control protein 7 (cdc7).